The chain runs to 320 residues: o-succinylbenzoate synthase (320 aa).

The active-site Proton donor is lysine 133. Residues aspartate 161, glutamate 190, and aspartate 213 each contribute to the Mg(2+) site. The active-site Proton acceptor is lysine 235.

Belongs to the mandelate racemase/muconate lactonizing enzyme family. MenC type 1 subfamily. It depends on a divalent metal cation as a cofactor.

It catalyses the reaction (1R,6R)-6-hydroxy-2-succinyl-cyclohexa-2,4-diene-1-carboxylate = 2-succinylbenzoate + H2O. The protein operates within quinol/quinone metabolism; 1,4-dihydroxy-2-naphthoate biosynthesis; 1,4-dihydroxy-2-naphthoate from chorismate: step 4/7. Its pathway is quinol/quinone metabolism; menaquinone biosynthesis. Its function is as follows. Converts 2-succinyl-6-hydroxy-2,4-cyclohexadiene-1-carboxylate (SHCHC) to 2-succinylbenzoate (OSB). The protein is o-succinylbenzoate synthase of Salmonella typhi.